The sequence spans 95 residues: Protein TusB (95 aa).

This sequence belongs to the DsrH/TusB family. As to quaternary structure, heterohexamer, formed by a dimer of trimers. The hexameric TusBCD complex contains 2 copies each of TusB, TusC and TusD. The TusBCD complex interacts with TusE.

It is found in the cytoplasm. In terms of biological role, part of a sulfur-relay system required for 2-thiolation of 5-methylaminomethyl-2-thiouridine (mnm(5)s(2)U) at tRNA wobble positions. The polypeptide is Protein TusB (Buchnera aphidicola subsp. Schizaphis graminum (strain Sg)).